The sequence spans 249 residues: Acidic leucine-rich nuclear phosphoprotein 32 family member A (249 aa).

Position 15 is a phosphothreonine (threonine 15). Serine 17 carries the post-translational modification Phosphoserine. LRR repeat units follow at residues 18 to 41 (DVKE…TDEF), 43 to 64 (ELEF…PKLN), 65 to 87 (KLKK…AEKC), and 89 to 110 (NLTH…EPLK). Residues 123–161 (CEVTNLNDYRENVFKLLPQLTYLDGYDRDDKEAPDSDAE) enclose the LRRCT domain. Positions 147–156 (GYDRDDKEAP) are enriched in basic and acidic residues. A disordered region spans residues 147-249 (GYDRDDKEAP…EPXDXGEDDD (103 aa)). The tract at residues 150-174 (RDDKEAPDSDAEGYVEGLDDDEEDE) is necessary for tumor-suppressive function. Over residues 157-230 (DSDAEGYVEG…DEEDEEDVGE (74 aa)) the composition is skewed to acidic residues. Residues serine 158 and serine 204 each carry the phosphoserine modification. An interaction with E4F1 region spans residues 165–249 (EGLDDDEEDE…EPXDXGEDDD (85 aa)).

It belongs to the ANP32 family. Component of the SET complex, composed of at least ANP32A, APEX1, HMGB2, NME1, SET and TREX1. Directly interacts with SET. Interacts with ATXN1/SCA1. Interacts with MAP1B. Interacts with ELAVL1. Part of the INHAT (inhibitor of histone acetyltransferases) complex. Interacts with E4F1. Post-translationally, phosphorylated on serine residues, at least in part by casein kinase 2/CK2. In terms of processing, some glutamate residues are glycylated by TTLL8. This modification occurs exclusively on glutamate residues and results in a glycine chain on the gamma-carboxyl group.

It is found in the nucleus. The protein localises to the cytoplasm. It localises to the endoplasmic reticulum. In terms of biological role, multifunctional protein that is involved in the regulation of many processes including tumor suppression, apoptosis, cell cycle progression or transcription. Promotes apoptosis by favouring the activation of caspase-9/CASP9 and allowing apoptosome formation. In addition, plays a role in the modulation of histone acetylation and transcription as part of the INHAT (inhibitor of histone acetyltransferases) complex. Inhibits the histone-acetyltranferase activity of EP300/CREBBP (CREB-binding protein) and EP300/CREBBP-associated factor by histone masking. Preferentially binds to unmodified histone H3 and sterically inhibiting its acetylation and phosphorylation leading to cell growth inhibition. Participates in other biochemical processes such as regulation of mRNA nuclear-to-cytoplasmic translocation and stability by its association with ELAVL1 (Hu-antigen R). Plays a role in E4F1-mediated transcriptional repression as well as inhibition of protein phosphatase 2A. This chain is Acidic leucine-rich nuclear phosphoprotein 32 family member A (ANP32A), found in Canis lupus familiaris (Dog).